The primary structure comprises 128 residues: Small ribosomal subunit protein eS8 (128 aa).

The protein belongs to the eukaryotic ribosomal protein eS8 family. In terms of assembly, part of the 30S ribosomal subunit.

The sequence is that of Small ribosomal subunit protein eS8 from Methanococcus maripaludis (strain DSM 14266 / JCM 13030 / NBRC 101832 / S2 / LL).